The chain runs to 123 residues: Large-conductance mechanosensitive channel (123 aa).

2 consecutive transmembrane segments (helical) span residues 14 to 34 and 67 to 87; these read VIDM…VKSL and GSFL…FLMV.

This sequence belongs to the MscL family. Homopentamer.

Its subcellular location is the cell membrane. Its function is as follows. Channel that opens in response to stretch forces in the membrane lipid bilayer. May participate in the regulation of osmotic pressure changes within the cell. The sequence is that of Large-conductance mechanosensitive channel from Limosilactobacillus reuteri (strain DSM 20016) (Lactobacillus reuteri).